We begin with the raw amino-acid sequence, 90 residues long: Small ribosomal subunit protein uS15c (90 aa).

The protein belongs to the universal ribosomal protein uS15 family. Part of the 30S ribosomal subunit.

The protein localises to the plastid. It is found in the chloroplast. The sequence is that of Small ribosomal subunit protein uS15c (rps15) from Piper cenocladum (Ant piper).